The primary structure comprises 104 residues: UPF0213 protein ORF82 (104 aa).

A GIY-YIG domain is found at 7–83 (KVWCVYIVRR…KRKRGKYFKL (77 aa)).

This sequence belongs to the UPF0213 family.

This Orgyia pseudotsugata (Douglas-fir tussock moth) protein is UPF0213 protein ORF82.